The sequence spans 132 residues: Large ribosomal subunit protein bL12 (132 aa).

Residues 100–126 (ESTPKPVKEGASKEDAEAAKKELEEAG) show a composition bias toward basic and acidic residues. The segment at 100-132 (ESTPKPVKEGASKEDAEAAKKELEEAGAKVSIK) is disordered.

This sequence belongs to the bacterial ribosomal protein bL12 family. Homodimer. Part of the ribosomal stalk of the 50S ribosomal subunit. Forms a multimeric L10(L12)X complex, where L10 forms an elongated spine to which 2 to 4 L12 dimers bind in a sequential fashion. Binds GTP-bound translation factors.

Functionally, forms part of the ribosomal stalk which helps the ribosome interact with GTP-bound translation factors. Is thus essential for accurate translation. The sequence is that of Large ribosomal subunit protein bL12 from Thermosynechococcus vestitus (strain NIES-2133 / IAM M-273 / BP-1).